The following is a 655-amino-acid chain: Squalene-tetrahymanol cyclase THC1 (655 aa).

A signal peptide spans 1-20 (MKKILIGLIIGLFLFSSVNA). Asn-23, Asn-44, Asn-69, and Asn-77 each carry an N-linked (GlcNAc...) asparagine glycan. Catalysis depends on Asp-373, which acts as the Proton donor. 2 PFTB repeats span residues 393 to 435 (IPET…GIAN) and 515 to 562 (VQNS…GLLA).

This sequence belongs to the terpene cyclase/mutase family.

The protein localises to the membrane. It carries out the reaction tetrahymanol = squalene + H2O. 2,3-iminosqualene and N,N-dimethyldodecylamine~N-oxlde are effective inhibitors with IC(50) values of 50 and 30 nM, respectively. Squalene cyclase that catalyzes the oxygen-independent cyclization of squalene into tetrahymanol, a triterpenoid sterol with five cyclohexyl rings that is involved in membrane integrity, permeability and fluidity. This Tetrahymena thermophila (strain SB210) protein is Squalene-tetrahymanol cyclase THC1.